We begin with the raw amino-acid sequence, 122 residues long: Large ribosomal subunit protein uL14 (122 aa).

The protein belongs to the universal ribosomal protein uL14 family. As to quaternary structure, part of the 50S ribosomal subunit. Forms a cluster with proteins L3 and L19. In the 70S ribosome, L14 and L19 interact and together make contacts with the 16S rRNA in bridges B5 and B8.

Its function is as follows. Binds to 23S rRNA. Forms part of two intersubunit bridges in the 70S ribosome. The sequence is that of Large ribosomal subunit protein uL14 from Lachnospira eligens (strain ATCC 27750 / DSM 3376 / VPI C15-48 / C15-B4) (Eubacterium eligens).